The primary structure comprises 385 residues: POU domain, class 3, transcription factor 2-B (385 aa).

Disordered regions lie at residues 106–136 (LVHP…SSNG), 149–209 (NGMI…TPTS), and 351–385 (EKRM…TSVQ). Over residues 122 to 136 (STGSTHLSSMASSNG) the composition is skewed to polar residues. The span at 165 to 178 (LRDSHDDHHGDHGH) shows a compositional bias: basic and acidic residues. Residues 179–196 (QQPSQTQQQQQQHSQLQG) show a composition bias toward low complexity. The region spanning 204–278 (EDTPTSDDLE…LLNKWLEEAD (75 aa)) is the POU-specific domain. The homeobox DNA-binding region spans 296–355 (KRKKRTSIEVSVKGALESHFLKCPKPAAQEITSLADSLQLEKEVVRVWFCNRRQKEKRMT).

Belongs to the POU transcription factor family. Class-3 subfamily. In terms of tissue distribution, expressed in the developing brain and spinal cord. Also found in a restricted region of the auditory vesicle during development. In the adult, expression is restricted to the brain.

Its subcellular location is the nucleus. In terms of biological role, transcription factor that may be implicated in patterning of the central nervous system during early development. This is POU domain, class 3, transcription factor 2-B (pou3f2-b) from Xenopus laevis (African clawed frog).